A 968-amino-acid polypeptide reads, in one-letter code: RNA polymerase-associated protein RapA (968 aa).

In terms of domain architecture, Helicase ATP-binding spans 164-334 (DVGRRHAPRV…FARLRLLDPN (171 aa)). 177–184 (DEVGLGKT) lines the ATP pocket. Residues 280 to 283 (DEAH) carry the DEAH box motif. Residues 490 to 662 (RVEWLMGYLT…YLASPDQTEG (173 aa)) enclose the Helicase C-terminal domain.

The protein belongs to the SNF2/RAD54 helicase family. RapA subfamily. Interacts with the RNAP. Has a higher affinity for the core RNAP than for the holoenzyme. Its ATPase activity is stimulated by binding to RNAP.

Its function is as follows. Transcription regulator that activates transcription by stimulating RNA polymerase (RNAP) recycling in case of stress conditions such as supercoiled DNA or high salt concentrations. Probably acts by releasing the RNAP, when it is trapped or immobilized on tightly supercoiled DNA. Does not activate transcription on linear DNA. Probably not involved in DNA repair. In Escherichia coli O9:H4 (strain HS), this protein is RNA polymerase-associated protein RapA.